A 278-amino-acid polypeptide reads, in one-letter code: Dermonecrotic toxin LlSicTox-alphaIII3ii (278 aa).

His-5 is an active-site residue. 2 residues coordinate Mg(2+): Glu-25 and Asp-27. Residue His-40 is the Nucleophile of the active site. A disulfide bridge links Cys-44 with Cys-50. Residue Asp-84 participates in Mg(2+) binding.

Belongs to the arthropod phospholipase D family. Class I subfamily. Mg(2+) is required as a cofactor. As to expression, expressed by the venom gland.

Its subcellular location is the secreted. The catalysed reaction is an N-(acyl)-sphingosylphosphocholine = an N-(acyl)-sphingosyl-1,3-cyclic phosphate + choline. It carries out the reaction an N-(acyl)-sphingosylphosphoethanolamine = an N-(acyl)-sphingosyl-1,3-cyclic phosphate + ethanolamine. The enzyme catalyses a 1-acyl-sn-glycero-3-phosphocholine = a 1-acyl-sn-glycero-2,3-cyclic phosphate + choline. It catalyses the reaction a 1-acyl-sn-glycero-3-phosphoethanolamine = a 1-acyl-sn-glycero-2,3-cyclic phosphate + ethanolamine. Dermonecrotic toxins cleave the phosphodiester linkage between the phosphate and headgroup of certain phospholipids (sphingolipid and lysolipid substrates), forming an alcohol (often choline) and a cyclic phosphate. This toxin acts on sphingomyelin (SM). It may also act on ceramide phosphoethanolamine (CPE), lysophosphatidylcholine (LPC) and lysophosphatidylethanolamine (LPE), but not on lysophosphatidylserine (LPS), and lysophosphatidylglycerol (LPG). It acts by transphosphatidylation, releasing exclusively cyclic phosphate products as second products. Induces dermonecrosis, hemolysis, increased vascular permeability, edema, inflammatory response, and platelet aggregation. The protein is Dermonecrotic toxin LlSicTox-alphaIII3ii of Loxosceles laeta (South American recluse spider).